The chain runs to 188 residues: Translation machinery-associated protein 22 (188 aa).

Positions 96–167 (VVIKRIERSK…GVEELITQML (72 aa)) constitute an SUI1 domain.

The protein belongs to the DENR family. Interacts with the 40S ribosomal subunit.

It localises to the cytoplasm. This is Translation machinery-associated protein 22 (TMA22) from Yarrowia lipolytica (strain CLIB 122 / E 150) (Yeast).